The chain runs to 213 residues: 3-isopropylmalate dehydratase small subunit (213 aa).

Belongs to the LeuD family. LeuD type 1 subfamily. As to quaternary structure, heterodimer of LeuC and LeuD.

The catalysed reaction is (2R,3S)-3-isopropylmalate = (2S)-2-isopropylmalate. The protein operates within amino-acid biosynthesis; L-leucine biosynthesis; L-leucine from 3-methyl-2-oxobutanoate: step 2/4. Catalyzes the isomerization between 2-isopropylmalate and 3-isopropylmalate, via the formation of 2-isopropylmaleate. This is 3-isopropylmalate dehydratase small subunit from Magnetococcus marinus (strain ATCC BAA-1437 / JCM 17883 / MC-1).